We begin with the raw amino-acid sequence, 124 residues long: Small ribosomal subunit protein uS12c (124 aa).

It belongs to the universal ribosomal protein uS12 family. Part of the 30S ribosomal subunit.

The protein resides in the plastid. The protein localises to the chloroplast. Functionally, with S4 and S5 plays an important role in translational accuracy. Located at the interface of the 30S and 50S subunits. The protein is Small ribosomal subunit protein uS12c (rps12) of Oryza nivara (Indian wild rice).